A 177-amino-acid polypeptide reads, in one-letter code: Peptide methionine sulfoxide reductase MsrA (177 aa).

Cys15 is a catalytic residue.

This sequence belongs to the MsrA Met sulfoxide reductase family.

It catalyses the reaction L-methionyl-[protein] + [thioredoxin]-disulfide + H2O = L-methionyl-(S)-S-oxide-[protein] + [thioredoxin]-dithiol. It carries out the reaction [thioredoxin]-disulfide + L-methionine + H2O = L-methionine (S)-S-oxide + [thioredoxin]-dithiol. Its function is as follows. Has an important function as a repair enzyme for proteins that have been inactivated by oxidation. Catalyzes the reversible oxidation-reduction of methionine sulfoxide in proteins to methionine. This chain is Peptide methionine sulfoxide reductase MsrA, found in Listeria welshimeri serovar 6b (strain ATCC 35897 / DSM 20650 / CCUG 15529 / CIP 8149 / NCTC 11857 / SLCC 5334 / V8).